A 118-amino-acid chain; its full sequence is Fluoride-specific ion channel FluC 1 (118 aa).

4 consecutive transmembrane segments (helical) span residues 5–25 (FVLVGFGAALGAMLRYGISVL), 34–54 (FPFATFFINITGSFLLGFLVS), 56–76 (ALGPVWQLFLGTGFMGGYTTF), and 98–118 (YLGCTYVFGLIAAFLGLMLGV). The Na(+) site is built by G71 and T74.

It belongs to the fluoride channel Fluc/FEX (TC 1.A.43) family.

Its subcellular location is the cell membrane. It carries out the reaction fluoride(in) = fluoride(out). Its activity is regulated as follows. Na(+) is not transported, but it plays an essential structural role and its presence is essential for fluoride channel function. Fluoride-specific ion channel. Important for reducing fluoride concentration in the cell, thus reducing its toxicity. The chain is Fluoride-specific ion channel FluC 1 from Listeria monocytogenes serotype 4b (strain F2365).